A 61-amino-acid chain; its full sequence is Photosystem II reaction center protein K (61 aa).

Residues 1-24 constitute a propeptide that is removed on maturation; the sequence is MPNILSLTCICFNSVIYPTSFFFA. A helical membrane pass occupies residues 32 to 52; the sequence is IFNPIVDFMPVIPVLFFLLAF.

The protein belongs to the PsbK family. As to quaternary structure, PSII is composed of 1 copy each of membrane proteins PsbA, PsbB, PsbC, PsbD, PsbE, PsbF, PsbH, PsbI, PsbJ, PsbK, PsbL, PsbM, PsbT, PsbX, PsbY, PsbZ, Psb30/Ycf12, at least 3 peripheral proteins of the oxygen-evolving complex and a large number of cofactors. It forms dimeric complexes.

It localises to the plastid. Its subcellular location is the chloroplast thylakoid membrane. Its function is as follows. One of the components of the core complex of photosystem II (PSII). PSII is a light-driven water:plastoquinone oxidoreductase that uses light energy to abstract electrons from H(2)O, generating O(2) and a proton gradient subsequently used for ATP formation. It consists of a core antenna complex that captures photons, and an electron transfer chain that converts photonic excitation into a charge separation. The polypeptide is Photosystem II reaction center protein K (Oryza nivara (Indian wild rice)).